The sequence spans 385 residues: cAMP-dependent protein kinase, catalytic subunit-like (385 aa).

Residues L63–F317 enclose the Protein kinase domain. ATP-binding positions include I69–V77 and K92. D186 acts as the Proton acceptor in catalysis. The AGC-kinase C-terminal domain occupies E318 to W385.

The protein belongs to the protein kinase superfamily. Ser/Thr protein kinase family. cAMP subfamily.

It carries out the reaction L-seryl-[protein] + ATP = O-phospho-L-seryl-[protein] + ADP + H(+). The catalysed reaction is L-threonyl-[protein] + ATP = O-phospho-L-threonyl-[protein] + ADP + H(+). The polypeptide is cAMP-dependent protein kinase, catalytic subunit-like (Caenorhabditis briggsae).